The following is a 316-amino-acid chain: UPF0761 membrane protein PM1616 (316 aa).

Helical transmembrane passes span 36-56 (MLAL…FPVF), 92-112 (QMSA…INSI), 128-148 (LVFS…LIGA), 172-192 (ILSF…YTVV), 204-224 (IGAL…LWYV), and 236-256 (AMAT…VILI).

This sequence belongs to the UPF0761 family.

The protein localises to the cell inner membrane. This is UPF0761 membrane protein PM1616 from Pasteurella multocida (strain Pm70).